Consider the following 136-residue polypeptide: Holo-[acyl-carrier-protein] synthase (136 aa).

D8 and E57 together coordinate Mg(2+).

The protein belongs to the P-Pant transferase superfamily. AcpS family. It depends on Mg(2+) as a cofactor.

It is found in the cytoplasm. It carries out the reaction apo-[ACP] + CoA = holo-[ACP] + adenosine 3',5'-bisphosphate + H(+). Transfers the 4'-phosphopantetheine moiety from coenzyme A to a Ser of acyl-carrier-protein. This Methylobacterium radiotolerans (strain ATCC 27329 / DSM 1819 / JCM 2831 / NBRC 15690 / NCIMB 10815 / 0-1) protein is Holo-[acyl-carrier-protein] synthase.